We begin with the raw amino-acid sequence, 415 residues long: MANPKSLSLFLLSLLAIASAEVFFEERFEDGWENRWVKSDWKKDENTAGEWNYTSGKWNGDPNDKGIQTSEDYRFYAISAEFPEFSNKDKTLVFQFSVKHEQKLDCGGGYMKLLSSSTDQKKFGGDTPYSIMFGPDICGYSTKKVHAILNYNDTNHLIKKEVPCETDQLTHVYTLVIRPDATYSILIDNVEKQTGSLYTDWDLLPPKKIKDPEAKKPEDWDEKEYIPDPEDKKPEGYDDIPKEIPDPDAKKPEDWDDEEDGEWTAPTIANPEYKGPWKPKKIKNPNYKGKWKAPMIDNPDFKDDPEIYVYPNLKYVGIELWQVKSGTLFDNVLICNDPEYAKQLAEETWGKNKDAEKAAFEEAEKKKEEEESKDDPADSDADEDDDDADDTEGEDDGESKSDAAEDSAEDVHDEL.

The signal sequence occupies residues 1–20 (MANPKSLSLFLLSLLAIASA). An N-linked (GlcNAc...) asparagine glycan is attached at Asn-52. Cys-106 and Cys-138 are disulfide-bonded. An alpha-D-glucoside contacts are provided by Tyr-110, Lys-112, Tyr-129, and Asp-136. Asn-152 carries N-linked (GlcNAc...) asparagine glycosylation. 7 tandem repeats follow at residues 192-203 (KQTGSLYTDWDL), 211-222 (DPEAKKPEDWDE), 228-239 (DPEDKKPEGYDD), 246-257 (DPDAKKPEDWDD), 261-271 (GEWTAPTIANP), 275-285 (GPWKPKKIKNP), and 289-299 (GKWKAPMIDNP). The interval 192 to 257 (KQTGSLYTDW…DAKKPEDWDD (66 aa)) is 4 X approximate repeats. Residues 208–253 (KIKDPEAKKPEDWDEKEYIPDPEDKKPEGYDDIPKEIPDPDAKKPE) show a composition bias toward basic and acidic residues. Residues 208–276 (KIKDPEAKKP…TIANPEYKGP (69 aa)) form a disordered region. A 3 X approximate repeats region spans residues 261 to 299 (GEWTAPTIANPEYKGPWKPKKIKNPNYKGKWKAPMIDNP). Glu-319 provides a ligand contact to an alpha-D-glucoside. Over residues 347–376 (ETWGKNKDAEKAAFEEAEKKKEEEESKDDP) the composition is skewed to basic and acidic residues. Residues 347–415 (ETWGKNKDAE…DSAEDVHDEL (69 aa)) are disordered. Composition is skewed to acidic residues over residues 377–397 (ADSD…EDDG) and 404–415 (AEDSAEDVHDEL). The short motif at 412-415 (HDEL) is the Prevents secretion from ER element.

It belongs to the calreticulin family.

The protein resides in the endoplasmic reticulum lumen. Its function is as follows. Molecular calcium-binding chaperone promoting folding, oligomeric assembly and quality control in the ER via the calreticulin/calnexin cycle. This lectin may interact transiently with almost all of the monoglucosylated glycoproteins that are synthesized in the ER. The sequence is that of Calreticulin from Ricinus communis (Castor bean).